Reading from the N-terminus, the 637-residue chain is ATP-dependent zinc metalloprotease FtsH (637 aa).

Topologically, residues 1–7 (MNRVFRN) are cytoplasmic. A helical membrane pass occupies residues 8-28 (TIFYLLILLVVIGVVSYFQTS). The Extracellular portion of the chain corresponds to 29 to 109 (NPKTENMSYS…VEPAQETSGW (81 aa)). The chain crosses the membrane as a helical span at residues 110–130 (VTFLTTIIPFVIIFILFFFLL). Over 131 to 637 (NQAQGGGSRV…TEEKKDDTKE (507 aa)) the chain is Cytoplasmic. 201-208 (GPPGTGKT) serves as a coordination point for ATP. Position 423 (histidine 423) interacts with Zn(2+). Glutamate 424 is an active-site residue. The Zn(2+) site is built by histidine 427 and aspartate 499. The not necessary for FtsH function stretch occupies residues 514–637 (FGMSEKLGPL…TEEKKDDTKE (124 aa)).

It in the central section; belongs to the AAA ATPase family. This sequence in the C-terminal section; belongs to the peptidase M41 family. In terms of assembly, homohexamer. Interacts with FloT at midcell. Interacts with FloA at midcell. Another study shows only minor colocalization with FloA or FloT. The cofactor is Zn(2+).

The protein resides in the cell membrane. It is found in the membrane raft. Acts as a processive, ATP-dependent zinc metallopeptidase for both cytoplasmic and membrane proteins. Plays a role in the quality control of integral membrane proteins. Functionally, in vitro partially degrades Spo0E, the phosphatase that acts on Spo0A-P. Recognition requires the last 14 residues of Spo0E. Its stabile accumulation requires FlotA and Flot. May degrade EzrA. The sequence is that of ATP-dependent zinc metalloprotease FtsH from Bacillus subtilis (strain 168).